The sequence spans 98 residues: NADH-ubiquinone oxidoreductase chain 4L (98 aa).

A run of 3 helical transmembrane segments spans residues 1 to 21, 29 to 49, and 61 to 81; these read MSMV…GLLM, SLLC…LMIL, and IILL…LVMI.

The protein belongs to the complex I subunit 4L family. As to quaternary structure, core subunit of respiratory chain NADH dehydrogenase (Complex I) which is composed of 45 different subunits.

It localises to the mitochondrion inner membrane. The enzyme catalyses a ubiquinone + NADH + 5 H(+)(in) = a ubiquinol + NAD(+) + 4 H(+)(out). In terms of biological role, core subunit of the mitochondrial membrane respiratory chain NADH dehydrogenase (Complex I) which catalyzes electron transfer from NADH through the respiratory chain, using ubiquinone as an electron acceptor. Part of the enzyme membrane arm which is embedded in the lipid bilayer and involved in proton translocation. The sequence is that of NADH-ubiquinone oxidoreductase chain 4L (MT-ND4L) from Vicugna pacos (Alpaca).